The following is a 99-amino-acid chain: Nucleoid-associated protein SPN23F10240 (99 aa).

It belongs to the YbaB/EbfC family. In terms of assembly, homodimer.

The protein resides in the cytoplasm. The protein localises to the nucleoid. In terms of biological role, binds to DNA and alters its conformation. May be involved in regulation of gene expression, nucleoid organization and DNA protection. This chain is Nucleoid-associated protein SPN23F10240, found in Streptococcus pneumoniae (strain ATCC 700669 / Spain 23F-1).